The chain runs to 714 residues: Polyribonucleotide nucleotidyltransferase (714 aa).

Mg(2+) is bound by residues aspartate 488 and aspartate 494. The KH domain maps to 555-614 (PRIEVMNIPTDKIRDVIGSGGKVIREIVEKTGAKINIEDDGTVKIASSNGKEIEAAKKWI). An S1 motif domain is found at 624–692 (GEIYEGTVVK…ERGKVRLSMK (69 aa)).

It belongs to the polyribonucleotide nucleotidyltransferase family. The cofactor is Mg(2+).

The protein resides in the cytoplasm. It carries out the reaction RNA(n+1) + phosphate = RNA(n) + a ribonucleoside 5'-diphosphate. In terms of biological role, involved in mRNA degradation. Catalyzes the phosphorolysis of single-stranded polyribonucleotides processively in the 3'- to 5'-direction. The sequence is that of Polyribonucleotide nucleotidyltransferase from Brucella suis biovar 1 (strain 1330).